We begin with the raw amino-acid sequence, 355 residues long: Probable zinc transporter 12 (355 aa).

The first 25 residues, 1-25, serve as a signal peptide directing secretion; the sequence is MSRFRKTLVSAFVLCLVIFPLLVSA. At 26–50 the chain is on the extracellular side; the sequence is AEEENQCGGSKGGSAAEKASALKYK. A helical transmembrane segment spans residues 51 to 71; sequence IIAFFSILIAGVFGVCLPIFG. Residues 72–77 are Cytoplasmic-facing; sequence LKTESN. Residues 78–98 form a helical membrane-spanning segment; sequence FFMYVKAFAAGVILATGFVHI. Residues 99 to 116 lie on the Extracellular side of the membrane; that stretch reads LPDATESLTSSCLGEEPP. A helical transmembrane segment spans residues 117–137; sequence WGDFPMTGLVAMAASILTMLI. Residues 138-200 lie on the Cytoplasmic side of the membrane; sequence ESFASGYLNR…DDDHIDMRKK (63 aa). The interval 156 to 183 is disordered; the sequence is TLPVSTGGEEEHAHTGSAHTHASQGHSH. Residues 201–221 form a helical membrane-spanning segment; the sequence is IVTQILELGIVVHSVIIGISL. Topologically, residues 222–231 are extracellular; sequence GASPSVSTIK. The helical transmembrane segment at 232-252 threads the bilayer; that stretch reads PLIAAITFHQLFEGFGLGGCI. At 253–261 the chain is on the cytoplasmic side; sequence SEAKFRVKK. Residues 262 to 282 traverse the membrane as a helical segment; that stretch reads IWVMLMFFALTAPIGIGIGIG. Over 283–302 the chain is Extracellular; that stretch reads VAEIYNENSPMALKVSGFLN. A helical membrane pass occupies residues 303 to 323; it reads ATASGILIYMALVDLVAPLFM. Residues 324-334 are Cytoplasmic-facing; that stretch reads NQKTQSSMKIQ. Residues 335 to 355 form a helical membrane-spanning segment; it reads VACSVSLVVGAGLMSLLAIWA.

It belongs to the ZIP transporter (TC 2.A.5) family.

It localises to the cell membrane. Functionally, zinc transporter involved in zinc uptake in roots. Targeted by BZIP23 transcription factor in response to zinc-deficient conditions. This Arabidopsis thaliana (Mouse-ear cress) protein is Probable zinc transporter 12 (ZIP12).